Reading from the N-terminus, the 1385-residue chain is Formin-like protein 7 (1385 aa).

One can recognise a Phosphatase tensin-type domain in the interval 9 to 193 (FKKPPDGLLL…RYVSMRNVVP (185 aa)). The active-site Phosphocysteine intermediate is Cys-126. The 160-residue stretch at 199–358 (DRALTLDSVI…KASSTSQGNI (160 aa)) folds into the C2 tensin-type domain. Disordered stretches follow at residues 345–367 (IPQR…DGSE), 427–510 (APSR…LTVN), 649–989 (STAA…PLHW), and 1362–1385 (KRAQ…LLEP). Polar residues-rich tracts occupy residues 349–358 (KASSTSQGNI), 448–470 (TSAS…SPVQ), and 483–510 (PAQS…LTVN). Pro residues-rich tracts occupy residues 654–665 (PPLPPPLPPPLK) and 689–701 (TQPP…PPIQ). Residues 702–718 (PTLISNSIYSSTSSVVS) show a composition bias toward low complexity. Pro residues-rich tracts occupy residues 727-758 (PAPP…PPSA), 766-795 (PVPP…PPAA), and 802-815 (AVPP…PPMV). Over residues 855–867 (QTSSLVSSLPSSR) the composition is skewed to low complexity. 2 stretches are compositionally biased toward pro residues: residues 895 to 906 (SAPPAPPLPPPK) and 921 to 932 (WPPPPPPGPPPK). Positions 933–942 (NSSNSLPSKG) are enriched in low complexity. One can recognise an FH2 domain in the interval 974–1372 (RPNQSSKRTP…RAQMEAEKEK (399 aa)).

This sequence belongs to the formin-like family. Class-II subfamily.

This is Formin-like protein 7 (FH7) from Oryza sativa subsp. japonica (Rice).